A 313-amino-acid polypeptide reads, in one-letter code: NADH-ubiquinone oxidoreductase chain 1 (313 aa).

Helical transmembrane passes span 6-26, 31-51, 62-82, 84-104, 109-129, 142-162, 183-203, 216-235, 250-270, and 286-306; these read IIII…FVSL, ILAL…ILTP, FIIF…IITA, CIFL…DTGF, MLCV…CFLF, MFFS…IYSL, FYIA…LDGL, LVAG…YSVL, LCFG…FGFF, and AFIL…LFTT.

This sequence belongs to the complex I subunit 1 family.

It localises to the mitochondrion inner membrane. The enzyme catalyses a ubiquinone + NADH + 5 H(+)(in) = a ubiquinol + NAD(+) + 4 H(+)(out). Its function is as follows. Core subunit of the mitochondrial membrane respiratory chain NADH dehydrogenase (Complex I) that is believed to belong to the minimal assembly required for catalysis. Complex I functions in the transfer of electrons from NADH to the respiratory chain. The immediate electron acceptor for the enzyme is believed to be ubiquinone. The polypeptide is NADH-ubiquinone oxidoreductase chain 1 (ND1) (Leishmania tarentolae (Sauroleishmania tarentolae)).